The sequence spans 286 residues: Phosphoribosylaminoimidazole-succinocarboxamide synthase (286 aa).

The protein belongs to the SAICAR synthetase family.

It catalyses the reaction 5-amino-1-(5-phospho-D-ribosyl)imidazole-4-carboxylate + L-aspartate + ATP = (2S)-2-[5-amino-1-(5-phospho-beta-D-ribosyl)imidazole-4-carboxamido]succinate + ADP + phosphate + 2 H(+). It functions in the pathway purine metabolism; IMP biosynthesis via de novo pathway; 5-amino-1-(5-phospho-D-ribosyl)imidazole-4-carboxamide from 5-amino-1-(5-phospho-D-ribosyl)imidazole-4-carboxylate: step 1/2. The sequence is that of Phosphoribosylaminoimidazole-succinocarboxamide synthase from Histophilus somni (strain 2336) (Haemophilus somnus).